We begin with the raw amino-acid sequence, 73 residues long: Translation initiation factor IF-1 1 (73 aa).

Residues 1 to 72 (MAKEELIEFG…TKGRINFRHK (72 aa)) enclose the S1-like domain.

This sequence belongs to the IF-1 family. In terms of assembly, component of the 30S ribosomal translation pre-initiation complex which assembles on the 30S ribosome in the order IF-2 and IF-3, IF-1 and N-formylmethionyl-tRNA(fMet); mRNA recruitment can occur at any time during PIC assembly.

Its subcellular location is the cytoplasm. Its function is as follows. One of the essential components for the initiation of protein synthesis. Stabilizes the binding of IF-2 and IF-3 on the 30S subunit to which N-formylmethionyl-tRNA(fMet) subsequently binds. Helps modulate mRNA selection, yielding the 30S pre-initiation complex (PIC). Upon addition of the 50S ribosomal subunit IF-1, IF-2 and IF-3 are released leaving the mature 70S translation initiation complex. The polypeptide is Translation initiation factor IF-1 1 (Cupriavidus metallidurans (strain ATCC 43123 / DSM 2839 / NBRC 102507 / CH34) (Ralstonia metallidurans)).